Consider the following 140-residue polypeptide: Large ribosomal subunit protein uL11 (140 aa).

It belongs to the universal ribosomal protein uL11 family. As to quaternary structure, part of the ribosomal stalk of the 50S ribosomal subunit. Interacts with L10 and the large rRNA to form the base of the stalk. L10 forms an elongated spine to which L12 dimers bind in a sequential fashion forming a multimeric L10(L12)X complex. Post-translationally, one or more lysine residues are methylated.

In terms of biological role, forms part of the ribosomal stalk which helps the ribosome interact with GTP-bound translation factors. The protein is Large ribosomal subunit protein uL11 of Geobacter metallireducens (strain ATCC 53774 / DSM 7210 / GS-15).